The chain runs to 472 residues: ATP synthase subunit beta (472 aa).

An ATP-binding site is contributed by 150-157; sequence GGAGVGKT.

It belongs to the ATPase alpha/beta chains family. F-type ATPases have 2 components, CF(1) - the catalytic core - and CF(0) - the membrane proton channel. CF(1) has five subunits: alpha(3), beta(3), gamma(1), delta(1), epsilon(1). CF(0) has four main subunits: a, b, b' and c.

The protein resides in the cellular chromatophore membrane. The enzyme catalyses ATP + H2O + 4 H(+)(in) = ADP + phosphate + 5 H(+)(out). Functionally, produces ATP from ADP in the presence of a proton gradient across the membrane. The catalytic sites are hosted primarily by the beta subunits. The protein is ATP synthase subunit beta of Rhodobacter capsulatus (Rhodopseudomonas capsulata).